The chain runs to 295 residues: MDRIALMNAPGTDWSAWPAPAKLNLFLQITGRRADGYHLLQTVFRLLDWGDTIHLRVRSDGQILRIGESLPGVAEDDDLVIRAARLLQSAAGAAAGAEIRVDKRIPAGGGFGGGSSDAATVLVALNALWGLALTADTLAELGLQLGADVPVFVRGRNAWAEGVGEQLTPIALPEAAYLLVDPGVHVPTPVLFRSQELTRDAAPAKITDFASGSLLDNAFEPVLRRREPAVEAVFQALSRVGTPRLTGSGSGCFVEFATRAAAEQALAQLPGSLRAWVVEGAAHSPLLDARDAMKV.

K22 is an active-site residue. 106–116 (PAGGGFGGGSS) contacts ATP. The active site involves D148.

This sequence belongs to the GHMP kinase family. IspE subfamily.

The enzyme catalyses 4-CDP-2-C-methyl-D-erythritol + ATP = 4-CDP-2-C-methyl-D-erythritol 2-phosphate + ADP + H(+). Its pathway is isoprenoid biosynthesis; isopentenyl diphosphate biosynthesis via DXP pathway; isopentenyl diphosphate from 1-deoxy-D-xylulose 5-phosphate: step 3/6. Its function is as follows. Catalyzes the phosphorylation of the position 2 hydroxy group of 4-diphosphocytidyl-2C-methyl-D-erythritol. This is 4-diphosphocytidyl-2-C-methyl-D-erythritol kinase from Xanthomonas oryzae pv. oryzae (strain MAFF 311018).